Here is a 130-residue protein sequence, read N- to C-terminus: Small ribosomal subunit protein uS13 (130 aa).

Residues 97 to 116 (PVRGQRTKTNARTRRGKRKT) show a composition bias toward basic residues. The tract at residues 97–130 (PVRGQRTKTNARTRRGKRKTVGAGKSTSSIKRVK) is disordered. Over residues 121–130 (KSTSSIKRVK) the composition is skewed to polar residues.

The protein belongs to the universal ribosomal protein uS13 family. In terms of assembly, part of the 30S ribosomal subunit. Forms a loose heterodimer with protein S19. Forms two bridges to the 50S subunit in the 70S ribosome.

Its function is as follows. Located at the top of the head of the 30S subunit, it contacts several helices of the 16S rRNA. In the 70S ribosome it contacts the 23S rRNA (bridge B1a) and protein L5 of the 50S subunit (bridge B1b), connecting the 2 subunits; these bridges are implicated in subunit movement. Contacts the tRNAs in the A and P-sites. The sequence is that of Small ribosomal subunit protein uS13 from Endomicrobium trichonymphae.